Consider the following 364-residue polypeptide: MKLHEYEAKNIFKKYGIPVPESFLVSKEDDLNSINVDKEVVLKAQVLVGGRGKAGGILFASNKEEFIKKAEELFNKEVKGEKVEKILVEEKLPIEKEYYVSIIIDRDAKKPLIIFSTEGGVDIEEVAEKNPEKIIKYHIDVRKPFLPYIARWIVKEAKLPSNEIGKVADVIYKLYKIFKELDATMVEINPLVITKDGNVYAADAVLHLDDDAAFRHNYEEFEEYKNKEKLPFAYVELDGDVAVIGNGAGLTLASMDIINNLGRKPACFLDIGGGADAETVKLALRKVLENKNVKGIFINILGGITRCDEVAKGIVEVLKEHPNVKFAVRMMGTNEEIGRKILEEHGIPYETSMEEAGRKLIEQL.

In terms of domain architecture, ATP-grasp spans Lys9–Lys229. ATP-binding positions include Lys43, Gly50–Gly52, Glu89, Leu92, and Glu97. Mg(2+) is bound by residues Asn189 and Asp203. Substrate is bound by residues Asn246 and Gly303 to Thr305.

This sequence belongs to the succinate/malate CoA ligase beta subunit family. As to quaternary structure, heterotetramer of two alpha and two beta subunits. Mg(2+) serves as cofactor.

The enzyme catalyses succinate + ATP + CoA = succinyl-CoA + ADP + phosphate. The catalysed reaction is GTP + succinate + CoA = succinyl-CoA + GDP + phosphate. It participates in carbohydrate metabolism; tricarboxylic acid cycle; succinate from succinyl-CoA (ligase route): step 1/1. Functionally, succinyl-CoA synthetase functions in the citric acid cycle (TCA), coupling the hydrolysis of succinyl-CoA to the synthesis of either ATP or GTP and thus represents the only step of substrate-level phosphorylation in the TCA. The beta subunit provides nucleotide specificity of the enzyme and binds the substrate succinate, while the binding sites for coenzyme A and phosphate are found in the alpha subunit. The polypeptide is Succinate--CoA ligase [ADP-forming] subunit beta (Methanocaldococcus jannaschii (strain ATCC 43067 / DSM 2661 / JAL-1 / JCM 10045 / NBRC 100440) (Methanococcus jannaschii)).